A 93-amino-acid polypeptide reads, in one-letter code: Probable Fe(2+)-trafficking protein (93 aa).

This sequence belongs to the Fe(2+)-trafficking protein family.

Functionally, could be a mediator in iron transactions between iron acquisition and iron-requiring processes, such as synthesis and/or repair of Fe-S clusters in biosynthetic enzymes. This Acidithiobacillus ferrooxidans (strain ATCC 23270 / DSM 14882 / CIP 104768 / NCIMB 8455) (Ferrobacillus ferrooxidans (strain ATCC 23270)) protein is Probable Fe(2+)-trafficking protein.